A 190-amino-acid polypeptide reads, in one-letter code: ATP synthase subunit b 1 (190 aa).

The helical transmembrane segment at D35–P55 threads the bilayer.

It belongs to the ATPase B chain family. In terms of assembly, F-type ATPases have 2 components, F(1) - the catalytic core - and F(0) - the membrane proton channel. F(1) has five subunits: alpha(3), beta(3), gamma(1), delta(1), epsilon(1). F(0) has three main subunits: a(1), b(2) and c(10-14). The alpha and beta chains form an alternating ring which encloses part of the gamma chain. F(1) is attached to F(0) by a central stalk formed by the gamma and epsilon chains, while a peripheral stalk is formed by the delta and b chains.

Its subcellular location is the cell inner membrane. Its function is as follows. F(1)F(0) ATP synthase produces ATP from ADP in the presence of a proton or sodium gradient. F-type ATPases consist of two structural domains, F(1) containing the extramembraneous catalytic core and F(0) containing the membrane proton channel, linked together by a central stalk and a peripheral stalk. During catalysis, ATP synthesis in the catalytic domain of F(1) is coupled via a rotary mechanism of the central stalk subunits to proton translocation. Functionally, component of the F(0) channel, it forms part of the peripheral stalk, linking F(1) to F(0). This is ATP synthase subunit b 1 from Jannaschia sp. (strain CCS1).